A 758-amino-acid chain; its full sequence is 5-methyltetrahydropteroyltriglutamate--homocysteine methyltransferase (758 aa).

5-methyltetrahydropteroyltri-L-glutamate is bound by residues 17–20 (RELK) and K117. Residues 434-436 (IGS) and E487 contribute to the L-homocysteine site. L-methionine is bound by residues 434 to 436 (IGS) and E487. 5-methyltetrahydropteroyltri-L-glutamate-binding positions include 518-519 (RC) and W564. D602 contacts L-homocysteine. Residue D602 coordinates L-methionine. Residue E608 coordinates 5-methyltetrahydropteroyltri-L-glutamate. Zn(2+)-binding residues include H644, C646, and E668. The Proton donor role is filled by H697. Position 729 (C729) interacts with Zn(2+).

Belongs to the vitamin-B12 independent methionine synthase family. It depends on Zn(2+) as a cofactor.

It catalyses the reaction 5-methyltetrahydropteroyltri-L-glutamate + L-homocysteine = tetrahydropteroyltri-L-glutamate + L-methionine. The protein operates within amino-acid biosynthesis; L-methionine biosynthesis via de novo pathway; L-methionine from L-homocysteine (MetE route): step 1/1. Catalyzes the transfer of a methyl group from 5-methyltetrahydrofolate to homocysteine resulting in methionine formation. The protein is 5-methyltetrahydropteroyltriglutamate--homocysteine methyltransferase of Sodalis glossinidius (strain morsitans).